The chain runs to 297 residues: MEDYTKIEKIGEGTYGVVYKGRHKTTGQVVTMKKIRLESEEEGVPSTAIREISLLKELRHPNIVSLQDVLMQDSRLYLIFEFLSMDLKKYLDSIPPGQYMDSSLVKSYLYQILQGIVFCHSRRVLHRDLKPQNLLIDDKGTIKLADFGLARAFGIPIRVYTHEVVTLWYRSPEVLLGSARYSTPVDIWSIGTIFAELATKKPLFHGDSEIDQLFRIFRALGTPNNEVWPEVESLQDYKNTFPKWKPGSLASHVKNLDENGLDLLSKMLIYDPAKRISGKMALNHPYFNDLDNQIKKM.

Residue M1 is modified to N-acetylmethionine. Residue Y4 is modified to Phosphotyrosine; by PKR. A Protein kinase domain is found at 4–287 (YTKIEKIGEG…GKMALNHPYF (284 aa)). N6-acetyllysine; alternate occurs at positions 6 and 9. Residues K6 and K9 each participate in a glycyl lysine isopeptide (Lys-Gly) (interchain with G-Cter in SUMO2); alternate cross-link. 10 to 18 (IGEGTYGVV) is an ATP binding site. Residue T14 is modified to Phosphothreonine; by PKMYT1. Residue Y15 is modified to Phosphotyrosine; by PKMYT1, WEE1 and WEE2. Phosphotyrosine; by WEE1 and WEE2 is present on Y15. At Y19 the chain carries Phosphotyrosine. K20 participates in a covalent cross-link: Glycyl lysine isopeptide (Lys-Gly) (interchain with G-Cter in SUMO2). Residue K33 coordinates ATP. S39 carries the post-translational modification Phosphoserine. Y77 is subject to Phosphotyrosine. The active-site Proton acceptor is the D128. K139 participates in a covalent cross-link: Glycyl lysine isopeptide (Lys-Gly) (interchain with G-Cter in SUMO2). T141 bears the Phosphothreonine mark. T161 carries the phosphothreonine; by CAK modification. S178 carries the phosphoserine modification. T222 carries the phosphothreonine modification. Position 245 is an N6-succinyllysine (K245). S248 carries the post-translational modification Phosphoserine.

It belongs to the protein kinase superfamily. CMGC Ser/Thr protein kinase family. CDC2/CDKX subfamily. Forms a stable but non-covalent complex with a regulatory subunit and with a cyclin. Interacts with cyclins-B (CCNB1, CCNB2 and CCNB3) to form a serine/threonine kinase holoenzyme complex also known as maturation promoting factor (MPF). The cyclin subunit imparts substrate specificity to the complex. Can also form CDK1-cylin-D and CDK1-cyclin-E complexes that phosphorylate RB1 in vitro. Binds to RB1 and other transcription factors such as FOXO1 and RUNX2. Promotes G2-M transition when in complex with a cyclin-B. Interacts with DLGAP5. Binds to the CDK inhibitors CDKN1A/p21 and CDKN1B/p27. Isoform 2 is unable to complex with cyclin-B1 and also fails to bind to CDKN1A/p21. Interacts with catalytically active CCNB1 and RALBP1 during mitosis to form an endocytotic complex during interphase. Associates with cyclins-A and B1 during S-phase in regenerating hepatocytes. Interacts with FANCC. Interacts with CEP63; this interaction recruits CDK1 to centrosomes. Interacts with CENPA. Interacts with NR1D1. Interacts with proteasome subunit PSMA8; to participate in meiosis progression during spermatogenesis. Post-translationally, phosphorylation at Thr-161 by CAK/CDK7 activates kinase activity. Phosphorylation at Thr-14 and Tyr-15 by PKMYT1 prevents nuclear translocation. Phosphorylation at Tyr-15 by WEE1 and WEE2 inhibits the protein kinase activity and acts as a negative regulator of entry into mitosis (G2 to M transition). Phosphorylation by PKMYT1 and WEE1 takes place during mitosis to keep CDK1-cyclin-B complexes inactive until the end of G2. By the end of G2, PKMYT1 and WEE1 are inactivated, but CDC25A and CDC25B are activated. Dephosphorylation by active CDC25A and CDC25B at Thr-14 and Tyr-15, leads to CDK1 activation at the G2-M transition. Phosphorylation at Tyr-15 by WEE2 during oogenesis is required to maintain meiotic arrest in oocytes during the germinal vesicle (GV) stage, a long period of quiescence at dictyate prophase I, leading to prevent meiotic reentry. Phosphorylation by WEE2 is also required for metaphase II exit during egg activation to ensure exit from meiosis in oocytes and promote pronuclear formation. Phosphorylated at Tyr-4 by PKR/EIF2AK2 upon genotoxic stress. This phosphorylation triggers CDK1 polyubiquitination and subsequent proteolysis, thus leading to G2 arrest. In terms of processing, polyubiquitinated upon genotoxic stress.

It is found in the nucleus. It localises to the cytoplasm. Its subcellular location is the mitochondrion. The protein resides in the cytoskeleton. The protein localises to the microtubule organizing center. It is found in the centrosome. It localises to the spindle. The enzyme catalyses L-seryl-[protein] + ATP = O-phospho-L-seryl-[protein] + ADP + H(+). It carries out the reaction L-threonyl-[protein] + ATP = O-phospho-L-threonyl-[protein] + ADP + H(+). The catalysed reaction is [DNA-directed RNA polymerase] + ATP = phospho-[DNA-directed RNA polymerase] + ADP + H(+). Phosphorylation at Thr-14 or Tyr-15 inactivates the enzyme, while phosphorylation at Thr-161 activates it. Activated through a multistep process; binding to cyclin-B is required for relocation of cyclin-kinase complexes to the nucleus, activated by CAK/CDK7-mediated phosphorylation on Thr-161, and CDC25-mediated dephosphorylation of inhibitory phosphorylation on Thr-14 and Tyr-15. Activity is restricted during S-phase in an ATR-dependent manner to prevent premature entry into G2. Repressed by the CDK inhibitors CDKN1A/p21 and CDKN1B/p27 during the G1 phase and by CDKN1A/p21 at the G1-S checkpoint upon DNA damage. Transient activation by rapid and transient dephosphorylation at Tyr-15 triggered by TGFB1. Plays a key role in the control of the eukaryotic cell cycle by modulating the centrosome cycle as well as mitotic onset; promotes G2-M transition via association with multiple interphase cyclins. Phosphorylates PARVA/actopaxin, APC, AMPH, APC, BARD1, Bcl-xL/BCL2L1, BRCA2, CALD1, CASP8, CDC7, CDC20, CDC25A, CDC25C, CC2D1A, CENPA, CSNK2 proteins/CKII, FZR1/CDH1, CDK7, CEBPB, CHAMP1, DMD/dystrophin, EEF1 proteins/EF-1, EZH2, KIF11/EG5, EGFR, FANCG, FOS, GFAP, GOLGA2/GM130, GRASP1, UBE2A/hHR6A, HIST1H1 proteins/histone H1, HMGA1, HIVEP3/KRC, KAT5, LMNA, LMNB, LBR, LATS1, MAP1B, MAP4, MARCKS, MCM2, MCM4, MKLP1, MLST8, MYB, NEFH, NFIC, NPC/nuclear pore complex, PITPNM1/NIR2, NPM1, NCL, NUCKS1, NPM1/numatrin, ORC1, PRKAR2A, EEF1E1/p18, EIF3F/p47, p53/TP53, NONO/p54NRB, PAPOLA, PLEC/plectin, RB1, TPPP, UL40/R2, RAB4A, RAP1GAP, RBBP8/CtIP, RCC1, RPS6KB1/S6K1, KHDRBS1/SAM68, ESPL1, SKI, BIRC5/survivin, STIP1, TEX14, beta-tubulins, MAPT/TAU, NEDD1, VIM/vimentin, TK1, FOXO1, RUNX1/AML1, SAMHD1, SIRT2, CGAS and RUNX2. CDK1/CDC2-cyclin-B controls pronuclear union in interphase fertilized eggs. Essential for early stages of embryonic development. During G2 and early mitosis, CDC25A/B/C-mediated dephosphorylation activates CDK1/cyclin complexes which phosphorylate several substrates that trigger at least centrosome separation, Golgi dynamics, nuclear envelope breakdown and chromosome condensation. Once chromosomes are condensed and aligned at the metaphase plate, CDK1 activity is switched off by WEE1- and PKMYT1-mediated phosphorylation to allow sister chromatid separation, chromosome decondensation, reformation of the nuclear envelope and cytokinesis. Phosphorylates KRT5 during prometaphase and metaphase. Inactivated by PKR/EIF2AK2- and WEE1-mediated phosphorylation upon DNA damage to stop cell cycle and genome replication at the G2 checkpoint thus facilitating DNA repair. Reactivated after successful DNA repair through WIP1-dependent signaling leading to CDC25A/B/C-mediated dephosphorylation and restoring cell cycle progression. Catalyzes lamin (LMNA, LMNB1 and LMNB2) phosphorylation at the onset of mitosis, promoting nuclear envelope breakdown. In proliferating cells, CDK1-mediated FOXO1 phosphorylation at the G2-M phase represses FOXO1 interaction with 14-3-3 proteins and thereby promotes FOXO1 nuclear accumulation and transcription factor activity, leading to cell death of postmitotic neurons. The phosphorylation of beta-tubulins regulates microtubule dynamics during mitosis. NEDD1 phosphorylation promotes PLK1-mediated NEDD1 phosphorylation and subsequent targeting of the gamma-tubulin ring complex (gTuRC) to the centrosome, an important step for spindle formation. In addition, CC2D1A phosphorylation regulates CC2D1A spindle pole localization and association with SCC1/RAD21 and centriole cohesion during mitosis. The phosphorylation of Bcl-xL/BCL2L1 after prolongated G2 arrest upon DNA damage triggers apoptosis. In contrast, CASP8 phosphorylation during mitosis prevents its activation by proteolysis and subsequent apoptosis. This phosphorylation occurs in cancer cell lines, as well as in primary breast tissues and lymphocytes. EZH2 phosphorylation promotes H3K27me3 maintenance and epigenetic gene silencing. CALD1 phosphorylation promotes Schwann cell migration during peripheral nerve regeneration. CDK1-cyclin-B complex phosphorylates NCKAP5L and mediates its dissociation from centrosomes during mitosis. Regulates the amplitude of the cyclic expression of the core clock gene BMAL1 by phosphorylating its transcriptional repressor NR1D1, and this phosphorylation is necessary for SCF(FBXW7)-mediated ubiquitination and proteasomal degradation of NR1D1. Phosphorylates EML3 at 'Thr-881' which is essential for its interaction with HAUS augmin-like complex and TUBG1. Phosphorylates CGAS during mitosis, leading to its inhibition, thereby preventing CGAS activation by self DNA during mitosis. Phosphorylates SKA3 during mitosis which promotes SKA3 binding to the NDC80 complex and anchoring of the SKA complex to kinetochores, to enable stable attachment of mitotic spindle microtubules to kinetochores. This Pongo abelii (Sumatran orangutan) protein is Cyclin-dependent kinase 1 (CDK1).